We begin with the raw amino-acid sequence, 97 residues long: Putative pterin-4-alpha-carbinolamine dehydratase (97 aa).

The protein belongs to the pterin-4-alpha-carbinolamine dehydratase family.

The enzyme catalyses (4aS,6R)-4a-hydroxy-L-erythro-5,6,7,8-tetrahydrobiopterin = (6R)-L-erythro-6,7-dihydrobiopterin + H2O. This Rhizorhabdus wittichii (strain DSM 6014 / CCUG 31198 / JCM 15750 / NBRC 105917 / EY 4224 / RW1) (Sphingomonas wittichii) protein is Putative pterin-4-alpha-carbinolamine dehydratase.